Reading from the N-terminus, the 530-residue chain is UDP-glucuronosyltransferase 1A9 (530 aa).

Positions 1–25 (MACTGWTSPLPLCVCLLLTCGFAEA) are cleaved as a signal peptide. N71 is a glycosylation site (N-linked (GlcNAc...) asparagine). K99 bears the N6-succinyllysine mark. N-linked (GlcNAc...) asparagine glycans are attached at residues N292 and N344. Residues 488–504 (VIGFLLAVVLTVAFITF) traverse the membrane as a helical segment.

It belongs to the UDP-glycosyltransferase family. Homodimer. Homooligomer. Interacts with UGT1A1, UGT1A3, UGT1A4, UGT1A6, UGT1A7, UGT1A8 and UGT1A10 to form heterodimers. Isoform 1 interacts with isoform 2/i2 suggesting that oligomerization is involved in negative regulation of transferase activity by isoform 2. Isoform 1 also interacts with respective i2 isoforms of UGT1A1, UGT1A3, UGT1A4, UGT1A6, UGT1A7, UGT1A8 and UGT1A10. As to expression, expressed in liver, kidney, colon, esophagus and small intestine.

It localises to the endoplasmic reticulum membrane. It carries out the reaction glucuronate acceptor + UDP-alpha-D-glucuronate = acceptor beta-D-glucuronoside + UDP + H(+). It catalyses the reaction 2-hydroxy-17beta-estradiol + UDP-alpha-D-glucuronate = 2-hydroxy-17beta-estradiol 3-O-(beta-D-glucuronate) + UDP + H(+). The enzyme catalyses 4-hydroxy-17beta-estradiol + UDP-alpha-D-glucuronate = 17beta-estradiol 4-O-(beta-D-glucuronate) + UDP + H(+). The catalysed reaction is 2-hydroxyestrone + UDP-alpha-D-glucuronate = 2-hydroxyestrone 3-O-(beta-D-glucuronate) + UDP + H(+). It carries out the reaction 4-hydroxyestrone + UDP-alpha-D-glucuronate = estrone 4-O-(beta-D-glucuronate) + UDP + H(+). It catalyses the reaction prunetin + UDP-alpha-D-glucuronate = prunetin-5-O-beta-D-glucuronide + UDP. The enzyme catalyses 8-iso-prostaglandin F2alpha + UDP-alpha-D-glucuronate = 8-iso-prostaglandin F2alpha-glucuronide + UDP + H(+). The catalysed reaction is 5-epi-5-F2t-IsoP + UDP-alpha-D-glucuronate = 5-epi-5-F2t-IsoP-glucuronide + UDP + H(+). It carries out the reaction (5Z,8Z,11Z,14Z)-eicosatetraenoate + UDP-alpha-D-glucuronate = O-[(5Z),(8Z),(11Z),(14Z)-eicosatetraenoyl]-beta-D-glucuronate + UDP. It catalyses the reaction 15-hydroxy-(5Z,8Z,11Z,13E)-eicosatetraenoate + UDP-alpha-D-glucuronate = 15-O-(beta-D-glucuronosyl)-(5Z,8Z,11Z,14Z)-eicosatetraenoate + UDP + H(+). The enzyme catalyses prostaglandin B1 + UDP-alpha-D-glucuronate = 15-O-(beta-D-glucuronosyl)-prostaglandin B1 + UDP + H(+). The catalysed reaction is (E)-ferulate + UDP-alpha-D-glucuronate = (E)-4-O-(beta-D-glucuronosyl)-ferulate + UDP + H(+). It carries out the reaction (E)-ferulate + UDP-alpha-D-glucuronate = (E)-ferulic acid beta-D-glucuronate ester + UDP. It catalyses the reaction candesartan + UDP-alpha-D-glucuronate = candesartan O-beta-D-glucuronoside + UDP. The enzyme catalyses SN-38 + UDP-alpha-D-glucuronate = SN-38 O-beta-D-glucuronide + UDP + H(+). The catalysed reaction is mycophenolate + UDP-alpha-D-glucuronate = mycophenolate 7-O-beta-D-glucuronide + UDP + H(+). In terms of biological role, UDP-glucuronosyltransferase (UGT) that catalyzes phase II biotransformation reactions in which lipophilic substrates are conjugated with glucuronic acid to increase the metabolite's water solubility, thereby facilitating excretion into either the urine or bile. Essential for the elimination and detoxification of drugs, xenobiotics and endogenous compounds. Catalyzes the glucuronidation of endogenous estrogen hormones such as estradiol and estrone. Involved in the glucuronidation of arachidonic acid (AA) and AA-derived eicosanoids including 15-HETE, PGB1 and F2-isoprostanes (8-iso-PGF2alpha and 5-epi-5-F2t-IsoP). Glucuronates the phytochemical ferulic acid efficently at both the phenolic or the carboxylic acid group. Also catalyzes the glucuronidation of the isoflavones genistein, daidzein, glycitein, formononetin, biochanin A and prunetin, which are phytoestrogens with anticancer and cardiovascular properties. Involved in the glucuronidation of the AGTR1 angiotensin receptor antagonist caderastan, a drug which can inhibit the effect of angiotensin II. Involved in the biotransformation of 7-ethyl-10-hydroxycamptothecin (SN-38), the pharmacologically active metabolite of the anticancer drug irinotecan. Also metabolizes mycophenolate, an immunosuppressive agent. Functionally, lacks UGT glucuronidation activity but acts as a negative regulator of isoform 1. This is UDP-glucuronosyltransferase 1A9 from Homo sapiens (Human).